A 303-amino-acid chain; its full sequence is Vacuolar protein sorting-associated protein 26B (303 aa).

Belongs to the VPS26 family. Component of the retromer complex which consists of VPS29 (MAG1), VPS26 (VPS26A or VPS26B), VPS35 (VPS35A or VPS35B or VPS35C), VPS5/17 (SNX1 or SNX2A or SNX2B). Component of a retromer subcomplex consisting of VPS29 (MAG1), VPS26 (VPS26A or VPS26B), VPS35 (VPS35A or VPS35B or VPS35C).

Its subcellular location is the cytoplasm. It is found in the endosome membrane. It localises to the prevacuolar compartment membrane. The protein localises to the golgi apparatus. The protein resides in the trans-Golgi network membrane. Plays a role in vesicular protein sorting. Component of the membrane-associated retromer complex which is essential in endosome-to-Golgi retrograde transport. The VPS29-VPS26-VPS35 subcomplex may be involved in recycling of specific cargos from endosome to the plasma membrane. The sequence is that of Vacuolar protein sorting-associated protein 26B (VPS26B) from Arabidopsis thaliana (Mouse-ear cress).